A 523-amino-acid chain; its full sequence is Glycerate kinase (523 aa).

Ser-60 bears the Phosphoserine mark. Lys-200 bears the N6-acetyllysine mark.

The protein belongs to the glycerate kinase type-2 family.

Its subcellular location is the cytoplasm. The catalysed reaction is (R)-glycerate + ATP = (2R)-3-phosphoglycerate + ADP + H(+). The polypeptide is Glycerate kinase (GLYCTK) (Bos taurus (Bovine)).